Reading from the N-terminus, the 115-residue chain is NAD(P)H-quinone oxidoreductase subunit M (115 aa).

Belongs to the complex I NdhM subunit family. NDH-1 can be composed of about 15 different subunits; different subcomplexes with different compositions have been identified which probably have different functions.

It is found in the cellular thylakoid membrane. It carries out the reaction a plastoquinone + NADH + (n+1) H(+)(in) = a plastoquinol + NAD(+) + n H(+)(out). It catalyses the reaction a plastoquinone + NADPH + (n+1) H(+)(in) = a plastoquinol + NADP(+) + n H(+)(out). In terms of biological role, NDH-1 shuttles electrons from an unknown electron donor, via FMN and iron-sulfur (Fe-S) centers, to quinones in the respiratory and/or the photosynthetic chain. The immediate electron acceptor for the enzyme in this species is believed to be plastoquinone. Couples the redox reaction to proton translocation, and thus conserves the redox energy in a proton gradient. Cyanobacterial NDH-1 also plays a role in inorganic carbon-concentration. The protein is NAD(P)H-quinone oxidoreductase subunit M of Prochlorococcus marinus (strain MIT 9211).